We begin with the raw amino-acid sequence, 329 residues long: Ribonucleoside-diphosphate reductase small chain (329 aa).

The Fe cation site is built by aspartate 75, glutamate 106, and histidine 109. The active site involves tyrosine 113. Residues glutamate 168, glutamate 202, and histidine 205 each contribute to the Fe cation site.

The protein belongs to the ribonucleoside diphosphate reductase small chain family. In terms of assembly, heterodimer of a large and a small chain. Fe cation serves as cofactor.

Its subcellular location is the cytoplasm. The enzyme catalyses a 2'-deoxyribonucleoside 5'-diphosphate + [thioredoxin]-disulfide + H2O = a ribonucleoside 5'-diphosphate + [thioredoxin]-dithiol. In terms of biological role, provides the precursors necessary for DNA synthesis. Catalyzes the biosynthesis of deoxyribonucleotides from the corresponding ribonucleotides. This is Ribonucleoside-diphosphate reductase small chain from Nicotiana tabacum (Common tobacco).